Here is a 256-residue protein sequence, read N- to C-terminus: Imidazole glycerol phosphate synthase subunit HisF (256 aa).

Catalysis depends on residues Asp-12 and Asp-131.

It belongs to the HisA/HisF family. Heterodimer of HisH and HisF.

It localises to the cytoplasm. The enzyme catalyses 5-[(5-phospho-1-deoxy-D-ribulos-1-ylimino)methylamino]-1-(5-phospho-beta-D-ribosyl)imidazole-4-carboxamide + L-glutamine = D-erythro-1-(imidazol-4-yl)glycerol 3-phosphate + 5-amino-1-(5-phospho-beta-D-ribosyl)imidazole-4-carboxamide + L-glutamate + H(+). It functions in the pathway amino-acid biosynthesis; L-histidine biosynthesis; L-histidine from 5-phospho-alpha-D-ribose 1-diphosphate: step 5/9. IGPS catalyzes the conversion of PRFAR and glutamine to IGP, AICAR and glutamate. The HisF subunit catalyzes the cyclization activity that produces IGP and AICAR from PRFAR using the ammonia provided by the HisH subunit. This chain is Imidazole glycerol phosphate synthase subunit HisF, found in Bifidobacterium longum (strain NCC 2705).